We begin with the raw amino-acid sequence, 506 residues long: Glycine--tRNA ligase (506 aa).

R99 and E189 together coordinate substrate. ATP contacts are provided by residues 221–223 (RNE), 231–236 (FRVREL), 306–307 (EI), and 365–368 (GVDR). 236 to 240 (LEQME) provides a ligand contact to substrate. 361–365 (EPSAG) contributes to the substrate binding site.

Belongs to the class-II aminoacyl-tRNA synthetase family. As to quaternary structure, homodimer.

It is found in the cytoplasm. The catalysed reaction is tRNA(Gly) + glycine + ATP = glycyl-tRNA(Gly) + AMP + diphosphate. Catalyzes the attachment of glycine to tRNA(Gly). This is Glycine--tRNA ligase from Deinococcus radiodurans (strain ATCC 13939 / DSM 20539 / JCM 16871 / CCUG 27074 / LMG 4051 / NBRC 15346 / NCIMB 9279 / VKM B-1422 / R1).